Reading from the N-terminus, the 300-residue chain is Sodium/potassium/calcium exchanger 1 (300 aa).

The segment at 1 to 251 (DPGSQGVGAE…ENEQPLSLEW (251 aa)) is disordered. Acidic residues-rich tracts occupy residues 92 to 102 (GEVEGDEDEGE), 109 to 119 (GEVEGDEDEGE), 126 to 136 (GEVEGDEDEGE), 158 to 175 (GEVE…DEGE), and 215 to 244 (GDSE…EENE). Residues 259-275 (AIYLFLLPIVFPLWLTV) traverse the membrane as a helical segment.

The protein belongs to the Ca(2+):cation antiporter (CaCA) (TC 2.A.19) family. SLC24A subfamily. Post-translationally, the uncleaved signal sequence is required for efficient membrane targeting and proper membrane integration and topology.

Its subcellular location is the cell membrane. It catalyses the reaction Ca(2+)(out) + K(+)(out) + 4 Na(+)(in) = Ca(2+)(in) + K(+)(in) + 4 Na(+)(out). Functionally, calcium, potassium:sodium antiporter that transports 1 Ca(2+) and 1 K(+) in exchange for 4 Na(+). Critical component of the visual transduction cascade, controlling the calcium concentration of outer segments during light and darkness. Light causes a rapid lowering of cytosolic free calcium in the outer segment of both retinal rod and cone photoreceptors and the light-induced lowering of calcium is caused by extrusion via this protein which plays a key role in the process of light adaptation. This is Sodium/potassium/calcium exchanger 1 (SLC24A1) from Bison bison (American bison).